The following is a 297-amino-acid chain: Inosose dehydratase (297 aa).

This sequence belongs to the IolE/MocC family. The cofactor is glutathione. Co(2+) serves as cofactor. Mn(2+) is required as a cofactor.

It catalyses the reaction scyllo-inosose = 3D-3,5/4-trihydroxycyclohexane-1,2-dione + H2O. Its pathway is polyol metabolism; myo-inositol degradation into acetyl-CoA; acetyl-CoA from myo-inositol: step 2/7. In terms of biological role, catalyzes the dehydration of inosose (2-keto-myo-inositol, 2KMI or 2,4,6/3,5-pentahydroxycyclohexanone) to 3D-(3,5/4)-trihydroxycyclohexane-1,2-dione (D-2,3-diketo-4-deoxy-epi-inositol). The sequence is that of Inosose dehydratase from Clostridium perfringens (strain ATCC 13124 / DSM 756 / JCM 1290 / NCIMB 6125 / NCTC 8237 / Type A).